The following is a 164-amino-acid chain: Phosphohistidine phosphatase SixA homolog (164 aa).

The protein belongs to the SixA phosphatase family.

In Haemophilus influenzae (strain ATCC 51907 / DSM 11121 / KW20 / Rd), this protein is Phosphohistidine phosphatase SixA homolog (sixA-A).